A 240-amino-acid polypeptide reads, in one-letter code: tRNA (guanine-N(1)-)-methyltransferase (240 aa).

Residues G110 and 129-134 (LGDFVL) each bind S-adenosyl-L-methionine.

The protein belongs to the RNA methyltransferase TrmD family. As to quaternary structure, homodimer.

The protein resides in the cytoplasm. It carries out the reaction guanosine(37) in tRNA + S-adenosyl-L-methionine = N(1)-methylguanosine(37) in tRNA + S-adenosyl-L-homocysteine + H(+). Specifically methylates guanosine-37 in various tRNAs. This is tRNA (guanine-N(1)-)-methyltransferase from Clostridium botulinum (strain ATCC 19397 / Type A).